Consider the following 373-residue polypeptide: MKYTKQNFMMSVLGIIIYVTDLIVDIWVSVRFFHEGQYVFSALALSFMLFGTLVAQCFSYSWFKADLKKAGQESQHCFLLLHCLQGGVFTRYWFALKRGYHAAFKYDSNTSNFVEEQIDLHKEVIDRVTDLSMLRLFETYLEGCPQLILQLYILLEHGQANFSQYAAIMVSCCAISWSTVDYQVALRKSLPDKKLLNGLCPKITYLFYKLFTLLSWMLSVVLLLFLNVKIALFLLLFLWLLGIIWAFKNNTQFCTCISMEFLYRIVVGFILIFTFFNIKGQNTKCPMSCYYIVRVLGTLGILTVFWVCPLNIFNPDYFIPISITIVLTLLLGILFLIVYYGSFHPNRSAETKCDEIDGKPVLRECRMRYFLME.

Helical transmembrane passes span 8–28, 38–58, 166–186, 203–223, 224–244, 256–276, 295–315, and 318–338; these read FMMSVLGIIIYVTDLIVDIWV, YVFSALALSFMLFGTLVAQCF, AAIMVSCCAISWSTVDYQVAL, ITYLFYKLFTLLSWMLSVVLL, LFLNVKIALFLLLFLWLLGII, CISMEFLYRIVVGFILIFTFF, VLGTLGILTVFWVCPLNIFNP, and FIPISITIVLTLLLGILFLIV.

This sequence belongs to the XK family. In terms of processing, undergoes proteolytic processing by caspase-3 (CASP3), caspase-6 (CASP6) and caspase-7 (CASP7) to generate the XK-related protein 9, processed form, leading to its activation.

It localises to the cell membrane. The catalysed reaction is a 1,2-diacyl-sn-glycero-3-phospho-L-serine(in) = a 1,2-diacyl-sn-glycero-3-phospho-L-serine(out). Its activity is regulated as follows. Activated upon caspase cleavage to generate the XK-related protein 9, processed form. Does not act prior the onset of apoptosis. Functionally, phospholipid scramblase that promotes phosphatidylserine exposure on apoptotic cell surface. Phosphatidylserine is a specific marker only present at the surface of apoptotic cells and acts as a specific signal for engulfment. This chain is XK-related protein 9, found in Pan troglodytes (Chimpanzee).